The sequence spans 307 residues: Glycine--tRNA ligase alpha subunit (307 aa).

This sequence belongs to the class-II aminoacyl-tRNA synthetase family. As to quaternary structure, tetramer of two alpha and two beta subunits.

The protein localises to the cytoplasm. It catalyses the reaction tRNA(Gly) + glycine + ATP = glycyl-tRNA(Gly) + AMP + diphosphate. The sequence is that of Glycine--tRNA ligase alpha subunit from Aeromonas salmonicida (strain A449).